Here is a 689-residue protein sequence, read N- to C-terminus: MIPNQRQNLVSILRVCTRKGLSDQGGQVHCYLLKSGSGLNLITSNYLIDMYCKCREPLMAYKVFDSMPERNVVSWSALMSGHVLNGDLKGSLSLFSEMGRQGIYPNEFTFSTNLKACGLLNALEKGLQIHGFCLKIGFEMMVEVGNSLVDMYSKCGRINEAEKVFRRIVDRSLISWNAMIAGFVHAGYGSKALDTFGMMQEANIKERPDEFTLTSLLKACSSTGMIYAGKQIHGFLVRSGFHCPSSATITGSLVDLYVKCGYLFSARKAFDQIKEKTMISWSSLILGYAQEGEFVEAMGLFKRLQELNSQIDSFALSSIIGVFADFALLRQGKQMQALAVKLPSGLETSVLNSVVDMYLKCGLVDEAEKCFAEMQLKDVISWTVVITGYGKHGLGKKSVRIFYEMLRHNIEPDEVCYLAVLSACSHSGMIKEGEELFSKLLETHGIKPRVEHYACVVDLLGRAGRLKEAKHLIDTMPIKPNVGIWQTLLSLCRVHGDIELGKEVGKILLRIDAKNPANYVMMSNLYGQAGYWNEQGNARELGNIKGLKKEAGMSWVEIEREVHFFRSGEDSHPLTPVIQETLKEAERRLREELGYVYGLKHELHDIDDESKEENLRAHSEKLAIGLALATGGLNQKGKTIRVFKNLRVCVDCHEFIKGLSKITKIAYVVRDAVRFHSFEDGCCSCGDYW.

14 PPR repeats span residues 5-39, 40-70, 71-105, 106-140, 141-171, 172-206, 209-243, 246-276, 277-311, 312-342, 347-377, 378-412, 413-448, and 449-479; these read QRQNLVSILRVCTRKGLSDQGGQVHCYLLKSGSGL, NLITSNYLIDMYCKCREPLMAYKVFDSMPER, NVVSWSALMSGHVLNGDLKGSLSLFSEMGRQGIYP, NEFTFSTNLKACGLLNALEKGLQIHGFCLKIGFEM, MVEVGNSLVDMYSKCGRINEAEKVFRRIVDR, SLISWNAMIAGFVHAGYGSKALDTFGMMQEANIKE, DEFTLTSLLKACSSTGMIYAGKQIHGFLVRSGFHC, SATITGSLVDLYVKCGYLFSARKAFDQIKEK, TMISWSSLILGYAQEGEFVEAMGLFKRLQELNSQI, DSFALSSIIGVFADFALLRQGKQMQALAVKL, ETSVLNSVVDMYLKCGLVDEAEKCFAEMQLK, DVISWTVVITGYGKHGLGKKSVRIFYEMLRHNIEP, DEVCYLAVLSACSHSGMIKEGEELFSKLLETHGIKP, and RVEHYACVVDLLGRAGRLKEAKHLIDTMPIK. A type E motif region spans residues 484–559; sequence IWQTLLSLCR…EAGMSWVEIE (76 aa). A type E(+) motif region spans residues 560 to 590; sequence REVHFFRSGEDSHPLTPVIQETLKEAERRLR. Residues 592–689 are type DYW motif; it reads ELGYVYGLKH…DGCCSCGDYW (98 aa).

It belongs to the PPR family. PCMP-H subfamily.

This chain is Putative pentatricopeptide repeat-containing protein At3g15130 (PCMP-H86), found in Arabidopsis thaliana (Mouse-ear cress).